The primary structure comprises 303 residues: Recombination-associated protein RdgC (303 aa).

The protein belongs to the RdgC family.

Its subcellular location is the cytoplasm. It is found in the nucleoid. In terms of biological role, may be involved in recombination. The chain is Recombination-associated protein RdgC from Salmonella agona (strain SL483).